We begin with the raw amino-acid sequence, 356 residues long: Branched-chain-amino-acid transaminase 1 (356 aa).

Lys-197 carries the post-translational modification N6-(pyridoxal phosphate)lysine.

This sequence belongs to the class-IV pyridoxal-phosphate-dependent aminotransferase family. Pyridoxal 5'-phosphate is required as a cofactor.

It carries out the reaction L-leucine + 2-oxoglutarate = 4-methyl-2-oxopentanoate + L-glutamate. It catalyses the reaction L-isoleucine + 2-oxoglutarate = (S)-3-methyl-2-oxopentanoate + L-glutamate. The catalysed reaction is L-valine + 2-oxoglutarate = 3-methyl-2-oxobutanoate + L-glutamate. It participates in amino-acid biosynthesis; L-isoleucine biosynthesis; L-isoleucine from 2-oxobutanoate: step 4/4. It functions in the pathway amino-acid biosynthesis; L-leucine biosynthesis; L-leucine from 3-methyl-2-oxobutanoate: step 4/4. The protein operates within amino-acid biosynthesis; L-valine biosynthesis; L-valine from pyruvate: step 4/4. Its activity is regulated as follows. Inhibited by canaline. Its function is as follows. Transaminates branched-chain amino acids and ketoglutarate. Involved in the final step of the methionine regeneration pathway, where ketomethiobutyrate (KMTB) is converted to methionine via a transamination. The amino donor preference is isoleucine, leucine, valine, phenylalanine, and tyrosine. The polypeptide is Branched-chain-amino-acid transaminase 1 (ilvE) (Bacillus subtilis (strain 168)).